A 166-amino-acid polypeptide reads, in one-letter code: Small ribosomal subunit protein uS5 (166 aa).

The region spanning 12–75 is the S5 DRBM domain; the sequence is YIEKLVQVNR…EAARRNMIQV (64 aa).

The protein belongs to the universal ribosomal protein uS5 family. In terms of assembly, part of the 30S ribosomal subunit. Contacts proteins S4 and S8.

In terms of biological role, with S4 and S12 plays an important role in translational accuracy. Located at the back of the 30S subunit body where it stabilizes the conformation of the head with respect to the body. In Pseudomonas aeruginosa (strain LESB58), this protein is Small ribosomal subunit protein uS5.